Consider the following 645-residue polypeptide: Leucine-rich repeat protein soc-2 homolog (645 aa).

Residues 1–19 (MNLCSSGATASTTSLSSTG) show a composition bias toward low complexity. Disordered regions lie at residues 1 to 67 (MNLC…AGGS) and 83 to 151 (NSPA…IQAD). Composition is skewed to gly residues over residues 26-49 (GVPGGGAEGGGGDGGSGNSGGGGS) and 88-97 (GAGGASGSTG). Low complexity predominate over residues 98–107 (SGQQPTGSNG). 20 LRR repeats span residues 165-186 (GIKRLDLSKSSITVIPSTVKEC), 188-209 (HLTELYLYSNKIGQLPPEIGCL), 211-232 (SLRNLALNENSLTSLPESLQNC), 234-255 (QLKVLDLRHNKLAEIPPVIYRL), 257-278 (SLTTLYLRFNRITAVADDLRQL), 280-301 (NLTMLSLRENKIRELGSAIGAL), 303-324 (NLTTLDVSHNHLEHLPEDIGNC), 326-347 (NLSALDLQHNELLDIPDSIGNL), 349-371 (SLVRLGMRYNRLSSVPATLKNCK), 372-393 (SMDEFNVEGNGITQLPDGMLAS), 396-417 (GLTTITLSRNQFASYPTGGPAQ), 420-441 (NVYSINLEHNRIDKIPYGIFSR), 444-465 (GLTKLNMKENMLTALPLDIGTW), 467-488 (NMVELNLATNALQKLPDDIMNL), 490-511 (NLEILILSNNMLKKIPNTIGNL), 513-534 (RLRILDLEENRIEVLPHEIGLL), 536-557 (ELQRLILQTNQITMLPRSIGHL), 559-580 (NLTHLSVSENNLQFLPEEIGSL), 582-604 (SLENLYINQNPGLEKLPFELALC), and 606-627 (NLKYLNIDKCPLSTIPPEIQAG).

Belongs to the SHOC2 family.

Functionally, acts as a Ras effector and participates in MAPK pathway activation. Probably acts as a regulatory subunit of protein phosphatase that specifically dephosphorylates Raf kinase and stimulate Raf activity at specialized signaling complexes upon Ras activation. This chain is Leucine-rich repeat protein soc-2 homolog (Sur-8), found in Drosophila yakuba (Fruit fly).